Consider the following 588-residue polypeptide: L-fucose isomerase (588 aa).

Residues Glu335 and Asp359 each act as proton acceptor in the active site. The Mn(2+) site is built by Glu335, Asp359, and His525.

Belongs to the L-fucose isomerase family. Mn(2+) serves as cofactor.

The protein localises to the cytoplasm. It carries out the reaction L-fucose = L-fuculose. Its pathway is carbohydrate degradation; L-fucose degradation; L-lactaldehyde and glycerone phosphate from L-fucose: step 1/3. Its function is as follows. Converts the aldose L-fucose into the corresponding ketose L-fuculose. The protein is L-fucose isomerase of Streptococcus pneumoniae serotype 2 (strain D39 / NCTC 7466).